The sequence spans 302 residues: Transmembrane protein 191C (302 aa).

2 disordered regions span residues 1-21 (MAATQELLLQLQKDNRDGRQR) and 54-73 (LRRRSQAAQPLQGEAREAAR). The stretch at 5 to 160 (QELLLQLQKD…EKLQQDALQT (156 aa)) forms a coiled coil. A helical transmembrane segment spans residues 238 to 258 (VLGALQVLLTLPLLFLGLSLL).

It belongs to the TMEM191 family.

It localises to the membrane. In Homo sapiens (Human), this protein is Transmembrane protein 191C.